Reading from the N-terminus, the 638-residue chain is MVVSADPLSSERAEMNILEINQELRSQLAESNQQFRDLKEKFLITQATAYSLANQLKKYKCEEYKDIIDSVLRDELQSMEKLAEKLRQAEELRQYKALVHSQAKELTQLREKLREGRDASRWLNKHLKTLLTPDDPDKSQGQDLREQLAEGHRLAEHLVHKLSPENDEDEDEDEDDKDEEVEKVQESPAPREVQKTEEKEVPQDSLEECAVTCSNSHNPSNSNQPHRSTKITFKEHEVDSALVVESEHPHDEEEEALNIPPENQNDHEEEEGKAPVPPRHHDKSNSYRHREVSFLALDEQKVCSAQDVARDYSNPKWDETSLGFLEKQSDLEEVKGQETVAPRLSRGPLRVDKHEIPQESLDGCCLTPSILPDLTPSYHPYWSTLYSFEDKQVSLALVDKIKKDQEEIEDQSPPCPRLSQELPEVKEQEVPEDSVNEVYLTPSVHHDVSDCHQPYSSTLSSLEDQLACSALDVASPTEAACPQGTWSGDLSHHRSEVQISQAQLEPSTLVPSCLRLQLDQGFHCGNGLAQRGLSSTTCSFSANADSGNQWPFQELVLEPSLGMKNPPQLEDDALEGSASNTQGRQVTGRIRASLVLILKTIRRRLPFSKWRLAFRFAGPHAESAEIPNTAERMQRMIG.

2 coiled-coil regions span residues 10–43 (SERA…EKFL) and 69–115 (DSVL…KLRE). The tract at residues 157–285 (HLVHKLSPEN…VPPRHHDKSN (129 aa)) is disordered. Acidic residues predominate over residues 165 to 179 (ENDEDEDEDEDDKDE). One can recognise an Olduvai 1 domain in the interval 174–261 (EDDKDEEVEK…EEEEALNIPP (88 aa)). Basic and acidic residues predominate over residues 192–202 (EVQKTEEKEVP). Residues 214–226 (SNSHNPSNSNQPH) are compositionally biased toward low complexity. 2 stretches are compositionally biased toward basic and acidic residues: residues 232-251 (TFKE…HPHD) and 264-273 (QNDHEEEEGK). Olduvai domains lie at 326-399 (EKQS…ALVD) and 400-503 (KIKK…SQAQ). The tract at residues 563 to 584 (MKNPPQLEDDALEGSASNTQGR) is disordered.

It belongs to the NBPF family.

Its subcellular location is the cytoplasm. This is NBPF family member NBPF6 from Homo sapiens (Human).